Here is a 183-residue protein sequence, read N- to C-terminus: Orotate phosphoribosyltransferase (183 aa).

Residues Arg-21, Lys-88, and Glu-112–Ser-120 each bind 5-phospho-alpha-D-ribose 1-diphosphate. The orotate site is built by Thr-116 and Arg-144.

It belongs to the purine/pyrimidine phosphoribosyltransferase family. PyrE subfamily. Homodimer. Mg(2+) serves as cofactor.

It carries out the reaction orotidine 5'-phosphate + diphosphate = orotate + 5-phospho-alpha-D-ribose 1-diphosphate. The protein operates within pyrimidine metabolism; UMP biosynthesis via de novo pathway; UMP from orotate: step 1/2. In terms of biological role, catalyzes the transfer of a ribosyl phosphate group from 5-phosphoribose 1-diphosphate to orotate, leading to the formation of orotidine monophosphate (OMP). The sequence is that of Orotate phosphoribosyltransferase from Thermus thermophilus (strain ATCC 27634 / DSM 579 / HB8).